The primary structure comprises 365 residues: tRNA/tmRNA (uracil-C(5))-methyltransferase (365 aa).

Residues Gln189, Tyr217, Asn222, Glu238, and Asp298 each coordinate S-adenosyl-L-methionine. The active-site Nucleophile is the Cys323. Residue Glu357 is the Proton acceptor of the active site.

Belongs to the class I-like SAM-binding methyltransferase superfamily. RNA M5U methyltransferase family. TrmA subfamily.

It carries out the reaction uridine(54) in tRNA + S-adenosyl-L-methionine = 5-methyluridine(54) in tRNA + S-adenosyl-L-homocysteine + H(+). It catalyses the reaction uridine(341) in tmRNA + S-adenosyl-L-methionine = 5-methyluridine(341) in tmRNA + S-adenosyl-L-homocysteine + H(+). Dual-specificity methyltransferase that catalyzes the formation of 5-methyluridine at position 54 (m5U54) in all tRNAs, and that of position 341 (m5U341) in tmRNA (transfer-mRNA). This chain is tRNA/tmRNA (uracil-C(5))-methyltransferase, found in Pseudoalteromonas atlantica (strain T6c / ATCC BAA-1087).